The chain runs to 150 residues: UPF0178 protein ASA_3749 (150 aa).

This sequence belongs to the UPF0178 family.

This is UPF0178 protein ASA_3749 from Aeromonas salmonicida (strain A449).